The primary structure comprises 231 residues: Orotidine 5'-phosphate decarboxylase (231 aa).

Residues aspartate 11, lysine 33, 60–69, threonine 120, arginine 181, glutamine 190, glycine 210, and arginine 211 contribute to the substrate site; that span reads DLKFHDIPNT. The Proton donor role is filled by lysine 62.

The protein belongs to the OMP decarboxylase family. Type 1 subfamily. Homodimer.

It catalyses the reaction orotidine 5'-phosphate + H(+) = UMP + CO2. Its pathway is pyrimidine metabolism; UMP biosynthesis via de novo pathway; UMP from orotate: step 2/2. Its function is as follows. Catalyzes the decarboxylation of orotidine 5'-monophosphate (OMP) to uridine 5'-monophosphate (UMP). This Vibrio cholerae serotype O1 (strain ATCC 39541 / Classical Ogawa 395 / O395) protein is Orotidine 5'-phosphate decarboxylase.